The primary structure comprises 324 residues: Malate dehydrogenase (324 aa).

Residues 21–26 (GAGRVG) and Asp45 contribute to the NAD(+) site. Arg94 and Arg100 together coordinate substrate. NAD(+) is bound by residues Asn107 and 130–132 (VTN). Substrate contacts are provided by Asn132 and Arg163. Catalysis depends on His187, which acts as the Proton acceptor.

Belongs to the LDH/MDH superfamily. MDH type 3 family.

The catalysed reaction is (S)-malate + NAD(+) = oxaloacetate + NADH + H(+). Catalyzes the reversible oxidation of malate to oxaloacetate. This is Malate dehydrogenase from Trichormus variabilis (strain ATCC 29413 / PCC 7937) (Anabaena variabilis).